The primary structure comprises 287 residues: UBX domain-containing protein 1 (287 aa).

One can recognise a UBA domain in the interval Met-1–His-42. A disordered region spans residues Asp-44 to Tyr-207. 2 stretches are compositionally biased toward basic and acidic residues: residues Cys-72–Lys-114 and Lys-129–Arg-169. Residues Cys-72–Lys-164 are a coiled coil. Residues Ser-176–Pro-197 are compositionally biased toward low complexity. Residues Lys-205–Val-284 form the UBX domain.

The protein resides in the cytoplasm. In terms of biological role, component of a complex required to couple deglycosylation and proteasome-mediated degradation of misfolded proteins in the endoplasmic reticulum that are retrotranslocated in the cytosol. Involved in ubiquitin-proteasome systems. This Xenopus tropicalis (Western clawed frog) protein is UBX domain-containing protein 1 (ubxn1).